We begin with the raw amino-acid sequence, 455 residues long: Dihydrolipoyllysine-residue succinyltransferase component of 2-oxoglutarate dehydrogenase complex, mitochondrial (455 aa).

The N-terminal 68 residues, 1-68 (MLSRSRCASR…RFFRTTAVCK (68 aa)), are a transit peptide targeting the mitochondrion. One can recognise a Lipoyl-binding domain in the interval 71-145 (VITVKTPAFA…EGGTPLFTLR (75 aa)). The residue at position 82 (serine 82) is a Phosphoserine. The residue at position 111 (lysine 111) is an N6-lipoyllysine. Lysine 155 carries the N6-acetyllysine modification. Residues 155–173 (KPAAAPAAAAPKAEPTVSA) are compositionally biased toward low complexity. The interval 155-220 (KPAAAPAAAA…PRAEAGAGVG (66 aa)) is disordered. Positions 174–193 (VPPPPAAPIPTQMPPVPSPS) are enriched in pro residues. Residues lysine 269, lysine 274, lysine 275, lysine 279, and lysine 309 each carry the N6-acetyllysine modification. Active-site residues include histidine 426 and aspartate 430.

Belongs to the 2-oxoacid dehydrogenase family. As to quaternary structure, the 2-oxoglutarate dehydrogenase complex is composed of OGDH (2-oxoglutarate dehydrogenase; E1), DLST (dihydrolipoamide succinyltransferase; E2), DLD (dihydrolipoamide dehydrogenase; E3) and the assembly factor KGD4. It contains multiple copies of the three enzymatic components (E1, E2 and E3). In the nucleus, the 2-oxoglutarate dehydrogenase complex associates with KAT2A. Interacts with ABHD11; this interaction maintains the functional lipoylation of the 2-oxoglutarate dehydrogenase complex. It depends on (R)-lipoate as a cofactor.

Its subcellular location is the mitochondrion matrix. It is found in the nucleus. It carries out the reaction N(6)-[(R)-dihydrolipoyl]-L-lysyl-[protein] + succinyl-CoA = N(6)-[(R)-S(8)-succinyldihydrolipoyl]-L-lysyl-[protein] + CoA. The protein operates within amino-acid degradation; L-lysine degradation via saccharopine pathway; glutaryl-CoA from L-lysine: step 6/6. It functions in the pathway carbohydrate metabolism; tricarboxylic acid cycle. Its function is as follows. Dihydrolipoamide succinyltransferase (E2) component of the 2-oxoglutarate dehydrogenase complex. The 2-oxoglutarate dehydrogenase complex catalyzes the overall conversion of 2-oxoglutarate to succinyl-CoA and CO(2). The 2-oxoglutarate dehydrogenase complex is mainly active in the mitochondrion. A fraction of the 2-oxoglutarate dehydrogenase complex also localizes in the nucleus and is required for lysine succinylation of histones: associates with KAT2A on chromatin and provides succinyl-CoA to histone succinyltransferase KAT2A. In Bos taurus (Bovine), this protein is Dihydrolipoyllysine-residue succinyltransferase component of 2-oxoglutarate dehydrogenase complex, mitochondrial.